We begin with the raw amino-acid sequence, 543 residues long: CTP synthase (543 aa).

Residues 1 to 265 (MTRFVFITGG…DTEVLRHFGL (265 aa)) form an amidoligase domain region. Ser13 provides a ligand contact to CTP. Ser13 is a UTP binding site. Residue 14–19 (SLGKGI) coordinates ATP. L-glutamine is bound at residue Tyr54. Asp71 is an ATP binding site. Mg(2+) is bound by residues Asp71 and Glu139. CTP contacts are provided by residues 146-148 (DIE), 186-191 (KTKPTQ), and Lys222. UTP-binding positions include 186-191 (KTKPTQ) and Lys222. In terms of domain architecture, Glutamine amidotransferase type-1 spans 291–542 (RIAVVGKYTA…VGAAVKKMRL (252 aa)). L-glutamine is bound at residue Gly354. Catalysis depends on Cys381, which acts as the Nucleophile; for glutamine hydrolysis. L-glutamine is bound by residues 382–385 (FGMQ), Glu405, and Arg470. Residues His515 and Glu517 contribute to the active site.

The protein belongs to the CTP synthase family. Homotetramer.

The catalysed reaction is UTP + L-glutamine + ATP + H2O = CTP + L-glutamate + ADP + phosphate + 2 H(+). It carries out the reaction L-glutamine + H2O = L-glutamate + NH4(+). The enzyme catalyses UTP + NH4(+) + ATP = CTP + ADP + phosphate + 2 H(+). It participates in pyrimidine metabolism; CTP biosynthesis via de novo pathway; CTP from UDP: step 2/2. Its activity is regulated as follows. Allosterically activated by GTP, when glutamine is the substrate; GTP has no effect on the reaction when ammonia is the substrate. The allosteric effector GTP functions by stabilizing the protein conformation that binds the tetrahedral intermediate(s) formed during glutamine hydrolysis. Inhibited by the product CTP, via allosteric rather than competitive inhibition. Functionally, catalyzes the ATP-dependent amination of UTP to CTP with either L-glutamine or ammonia as the source of nitrogen. Regulates intracellular CTP levels through interactions with the four ribonucleotide triphosphates. This is CTP synthase from Gluconacetobacter diazotrophicus (strain ATCC 49037 / DSM 5601 / CCUG 37298 / CIP 103539 / LMG 7603 / PAl5).